Here is a 225-residue protein sequence, read N- to C-terminus: Myelin-associated neurite-outgrowth inhibitor (225 aa).

Over methionine 1 to histidine 58 the chain is Cytoplasmic. A helical membrane pass occupies residues valine 59 to alanine 75. The Extracellular segment spans residues arginine 76 to asparagine 173. Residues glycine 174 to leucine 193 traverse the membrane as a helical segment. Over threonine 194–tryptophan 225 the chain is Cytoplasmic.

This sequence belongs to the FAM168 family.

The protein resides in the cytoplasm. Its subcellular location is the perinuclear region. It localises to the cell membrane. It is found in the cell projection. The protein localises to the axon. Functionally, inhibitor of neuronal axonal outgrowth. This is Myelin-associated neurite-outgrowth inhibitor (fam168b) from Xenopus laevis (African clawed frog).